Here is a 254-residue protein sequence, read N- to C-terminus: tRNA pseudouridine synthase A (254 aa).

Asp52 acts as the Nucleophile in catalysis. Tyr110 is a binding site for substrate.

This sequence belongs to the tRNA pseudouridine synthase TruA family. In terms of assembly, homodimer.

The enzyme catalyses uridine(38/39/40) in tRNA = pseudouridine(38/39/40) in tRNA. Its function is as follows. Formation of pseudouridine at positions 38, 39 and 40 in the anticodon stem and loop of transfer RNAs. This Thermodesulfovibrio yellowstonii (strain ATCC 51303 / DSM 11347 / YP87) protein is tRNA pseudouridine synthase A.